A 255-amino-acid polypeptide reads, in one-letter code: MTSVNPSSSKPSALILLPAVDVVEGRAVRLVQGQAGSETEYGSALDAAMTWQRDGAEWIHLVDLDAAFGRGSNRELLAEVVGKLDVAVELSGGIRDDDSLAAALATGCARVNLGTAALENPQWCAKVVAEHGDKVAVGLDVKIVDGQHRLRGRGWETDGGDLWTVLDRLDGEGCSRFVVTDVTKDGTLNGPNLELLTQVCERTDAPVIASGGVSSLDDLRAIATLTDRGVEGAIVGKALYAGRFTLPQALDAVGP.

The Proton acceptor role is filled by Asp-21. Catalysis depends on Asp-140, which acts as the Proton donor.

It belongs to the HisA/HisF family.

Its subcellular location is the cytoplasm. The enzyme catalyses 1-(5-phospho-beta-D-ribosyl)-5-[(5-phospho-beta-D-ribosylamino)methylideneamino]imidazole-4-carboxamide = 5-[(5-phospho-1-deoxy-D-ribulos-1-ylimino)methylamino]-1-(5-phospho-beta-D-ribosyl)imidazole-4-carboxamide. It carries out the reaction N-(5-phospho-beta-D-ribosyl)anthranilate = 1-(2-carboxyphenylamino)-1-deoxy-D-ribulose 5-phosphate. Its pathway is amino-acid biosynthesis; L-histidine biosynthesis; L-histidine from 5-phospho-alpha-D-ribose 1-diphosphate: step 4/9. The protein operates within amino-acid biosynthesis; L-tryptophan biosynthesis; L-tryptophan from chorismate: step 3/5. Functionally, involved in both the histidine and tryptophan biosynthetic pathways. This Mycolicibacterium vanbaalenii (strain DSM 7251 / JCM 13017 / BCRC 16820 / KCTC 9966 / NRRL B-24157 / PYR-1) (Mycobacterium vanbaalenii) protein is Phosphoribosyl isomerase A.